A 657-amino-acid chain; its full sequence is Tyrosine-protein phosphatase vhp-1 (657 aa).

The Rhodanese domain occupies 21–151; sequence APDTTLVVDC…FAQQYPQLCE (131 aa). Positions 175 to 318 constitute a Tyrosine-protein phosphatase domain; sequence GITLITPNIY…LLEYENVLIK (144 aa). The Phosphocysteine intermediate role is filled by cysteine 262. Disordered regions lie at residues 353–426, 539–563, and 581–657; these read SNCV…MDLG, VPAG…SSSA, and PAST…PCHQ. Residues 366 to 405 show a composition bias toward low complexity; that stretch reads SPSSPSVSEGSAASEPETSSSAASSSSTASAPPSMPSTSE. The span at 406–419 shows a compositional bias: polar residues; sequence QGTSSGTVNVNGKR. Low complexity-rich tracts occupy residues 542 to 563 and 581 to 597; these read GSSS…SSSA and PAST…TSRA.

It belongs to the protein-tyrosine phosphatase family. Non-receptor class dual specificity subfamily. In terms of assembly, may interact with pmk-3. Expressed in the pharynx, intestine, neurons and vulval hypodermal cells.

The enzyme catalyses O-phospho-L-tyrosyl-[protein] + H2O = L-tyrosyl-[protein] + phosphate. Its function is as follows. Acts preferentially on the c-Jun N-terminal kinase (JNK) and p38 MAPKs. Plays an important role in the heavy metal stress response and in axon regeneration by negatively regulating the kgb-1 (JNK-like) and the pmk-1 (p38-type) MAPK signaling pathways. The chain is Tyrosine-protein phosphatase vhp-1 (vhp-1) from Caenorhabditis elegans.